A 236-amino-acid chain; its full sequence is Small ribosomal subunit protein uS3 (236 aa).

The region spanning 39–107 (VRHFLMQKLS…PTQLNIAEVR (69 aa)) is the KH type-2 domain.

Belongs to the universal ribosomal protein uS3 family. Part of the 30S ribosomal subunit. Forms a tight complex with proteins S10 and S14.

In terms of biological role, binds the lower part of the 30S subunit head. Binds mRNA in the 70S ribosome, positioning it for translation. The polypeptide is Small ribosomal subunit protein uS3 (Blochmanniella pennsylvanica (strain BPEN)).